The sequence spans 202 residues: Coiled-coil domain-containing protein 85B (202 aa).

Position 1 is an N-acetylmethionine (Met-1). 2 coiled-coil regions span residues 43 to 90 (GRLM…ERQR) and 118 to 147 (QKLA…LGEE). Positions 148 to 202 (WGPRGGPSGAGGSGAGPAPELALPPCGPRDLGDGSSSTGSVGSPDQLPLACSPDD) are disordered. The segment covering 150-162 (PRGGPSGAGGSGA) has biased composition (gly residues). Residues 180 to 190 (DGSSSTGSVGS) are compositionally biased toward low complexity.

This sequence belongs to the CCDC85 family. As to quaternary structure, interacts with CEBPB. Interacts with EURL. May interact with CEBPD. Interacts with MCRS1. Interacts with TCF7L2; competes with CTNNB1. Interacts with ANKRD26. Interacts with the beta-catenin family proteins ARVCF, CTNND1, CTNND2 and PKP4. In terms of assembly, (Microbial infection) Interacts with the viral phosphoprotein hepatitis delta antigen (HDAG); this interaction affects hepatitis delta virus (HDV) genomic replication in intact cells. In terms of tissue distribution, widely expressed including liver.

It is found in the nucleus. The protein localises to the cytoplasm. It localises to the cytoskeleton. Its subcellular location is the microtubule organizing center. The protein resides in the centrosome. It is found in the cell junction. The protein localises to the adherens junction. Its function is as follows. Functions as a transcriptional repressor. May inhibit the activity of CTNNB1 in a TP53-dependent manner and thus regulate cell growth. May function in adipocyte differentiation, negatively regulating mitotic clonal expansion. Plays a role in cell-cell adhesion and epithelium development through its interaction with proteins of the beta-catenin family. (Microbial infection) Plays a role in hepatitis delta virus (HDV) genomic replication. The chain is Coiled-coil domain-containing protein 85B (CCDC85B) from Homo sapiens (Human).